Here is a 158-residue protein sequence, read N- to C-terminus: Transcription elongation factor GreA (158 aa).

Residues 48 to 74 are a coiled coil; that stretch reads EYDAAKNRQGFIEGRIKELNDKIARAE.

It belongs to the GreA/GreB family.

Functionally, necessary for efficient RNA polymerase transcription elongation past template-encoded arresting sites. The arresting sites in DNA have the property of trapping a certain fraction of elongating RNA polymerases that pass through, resulting in locked ternary complexes. Cleavage of the nascent transcript by cleavage factors such as GreA or GreB allows the resumption of elongation from the new 3'terminus. GreA releases sequences of 2 to 3 nucleotides. The polypeptide is Transcription elongation factor GreA (Syntrophotalea carbinolica (strain DSM 2380 / NBRC 103641 / GraBd1) (Pelobacter carbinolicus)).